The primary structure comprises 106 residues: Large ribosomal subunit protein bL21 (106 aa).

This sequence belongs to the bacterial ribosomal protein bL21 family. Part of the 50S ribosomal subunit. Contacts protein L20.

Its function is as follows. This protein binds to 23S rRNA in the presence of protein L20. The chain is Large ribosomal subunit protein bL21 from Chlamydia pneumoniae (Chlamydophila pneumoniae).